Consider the following 580-residue polypeptide: Negative elongation factor B (580 aa).

N6-acetyllysine is present on Lys-519. The segment at 552–580 is disordered; that stretch reads DHRKPSPTQAAETPALDLPLPSVPAPATL. Ser-557 bears the Phosphoserine mark.

This sequence belongs to the NELF-B family. The NELF complex is composed of NELFA, NELFB, NELFCD and NELFE; the N-terminus of NELFB binds to the NELFA:NELFCD subcomplex. Binds RNA which may help to stabilize the NELF complex on nucleic acid Interacts with the first BRCT repeat of BRCA1. Interacts with KIAA1191. Isoform 1 and isoform 2 interact with NELFA, NELFCD and NELFE. In terms of tissue distribution, isoform 1 is expressed in the kidney, liver, adipose and lung. Isoform 2 is widely expressed.

The protein resides in the nucleus. Essential component of the NELF complex, a complex that negatively regulates the elongation of transcription by RNA polymerase II (Pol II). The NELF complex, which acts via an association with the DSIF complex and causes transcriptional pausing, is counteracted by the P-TEFb kinase complex. May be able to induce chromatin unfolding. Essential for early embryogenesis; plays an important role in maintaining the undifferentiated state of embryonic stem cells (ESCs) by preventing unscheduled expression of developmental genes. Plays a key role in establishing the responsiveness of stem cells to developmental cues; facilitates plasticity and cell fate commitment in ESCs by establishing the appropriate expression level of signaling molecules. Supports the transcription of genes involved in energy metabolism in cardiomyocytes; facilitates the association of transcription initiation factors with the promoters of the metabolism-related genes. The sequence is that of Negative elongation factor B (Nelfb) from Mus musculus (Mouse).